Consider the following 1040-residue polypeptide: Multidrug resistance protein MdtB (1040 aa).

12 consecutive transmembrane segments (helical) span residues 16–36 (FIMR…AGII), 347–367 (LMMA…NIPA), 369–389 (IIPG…MVFL), 396–416 (LTLM…IVVI), 440–460 (IGFT…PLLF), 472–492 (FAIT…TLTP), 537–557 (WLTL…WVFI), 863–883 (LGST…VLGI), 888–908 (FIHP…ALLA), 911–931 (IAGS…IGIV), 968–988 (ILMT…STGV), and 998–1018 (IGMV…TPVI).

Belongs to the resistance-nodulation-cell division (RND) (TC 2.A.6) family. MdtB subfamily. Part of a tripartite efflux system composed of MdtA, MdtB and MdtC. MdtB forms a heteromultimer with MdtC.

The protein resides in the cell inner membrane. The MdtABC tripartite complex confers resistance against novobiocin and deoxycholate. The protein is Multidrug resistance protein MdtB of Escherichia coli (strain K12 / MC4100 / BW2952).